We begin with the raw amino-acid sequence, 726 residues long: Tripartite terminase subunit 1 (726 aa).

The segment at cysteine 189–histidine 217 adopts a C3H1-type zinc-finger fold. Tyrosine 626–arginine 633 is an ATP binding site.

This sequence belongs to the herpesviridae TRM1 protein family. In terms of assembly, associates with TRM2 and TRM3 to form the tripartite terminase complex. Interacts with portal protein.

It is found in the host nucleus. In terms of biological role, component of the molecular motor that translocates viral genomic DNA in empty capsid during DNA packaging. Forms a tripartite terminase complex together with TRM2 and TRM3 in the host cytoplasm. Once the complex reaches the host nucleus, it interacts with the capsid portal vertex. This portal forms a ring in which genomic DNA is translocated into the capsid. TRM1 carries an endonuclease activity that plays an important role for the cleavage of concatemeric viral DNA into unit length genomes. This chain is Tripartite terminase subunit 1, found in Human herpesvirus 6B (strain Z29) (HHV-6 variant B).